We begin with the raw amino-acid sequence, 321 residues long: Fructose-1,6-bisphosphatase class 1 (321 aa).

Mg(2+)-binding residues include Glu-93, Asp-114, Leu-116, and Asp-117. Substrate-binding positions include 117-120, Asn-205, Tyr-233, and Lys-263; that span reads DGSS. Glu-269 contacts Mg(2+).

Belongs to the FBPase class 1 family. Homotetramer. Mg(2+) serves as cofactor.

The protein resides in the cytoplasm. The enzyme catalyses beta-D-fructose 1,6-bisphosphate + H2O = beta-D-fructose 6-phosphate + phosphate. It functions in the pathway carbohydrate biosynthesis; gluconeogenesis. This is Fructose-1,6-bisphosphatase class 1 from Persephonella marina (strain DSM 14350 / EX-H1).